The primary structure comprises 479 residues: U6 small nuclear RNA (adenine-(43)-N(6))-methyltransferase (479 aa).

S-adenosyl-L-methionine is bound by residues K82, G108, D131, T164, and N184. The tract at residues 420–424 (DNASQ) is involved in dlc-1 binding.

The protein belongs to the methyltransferase superfamily. METTL16/RlmF family. Self-associates. Interacts with dlc-1; the interaction is direct, and is required for nuclear localization of mett-10. Expressed in the intestine, vulva, and cells of the somatic gonad including distal tip cells, gonadal sheath cells and spermatheca.

The protein resides in the nucleus. The catalysed reaction is an adenosine in mRNA + S-adenosyl-L-methionine = an N(6)-methyladenosine in mRNA + S-adenosyl-L-homocysteine + H(+). It catalyses the reaction adenosine in U6 snRNA + S-adenosyl-L-methionine = N(6)-methyladenosine in U6 snRNA + S-adenosyl-L-homocysteine + H(+). RNA N6-methyltransferase that methylates adenosine residues at the N(6) position of a subset of RNAs and is involved in S-adenosyl-L-methionine homeostasis by regulating splicing of S-adenosylmethionine synthase transcripts (sams-3, sams-4 and sams-5). Able to N6-methylate a subset of mRNAs containing the 5'UACAGAAAC-3' nonamer sequence. Plays a key role in S-adenosyl-L-methionine homeostasis: under rich-diet conditions, catalyzes N6-methylation of S-adenosylmethionine synthase mRNAs (sams-3, sams-4 and sams-5), directly inhibiting splicing and protein production of S-adenosylmethionine synthase. In addition to mRNAs, also able to mediate N6-methylation of U6 small nuclear RNA (U6 snRNA). Required for gamete production, inhibiting germ cell proliferative fate and ensuring germ cell meiotic development. Also promotes progression of the mitotic cell cycle in those germ cells that continue to proliferate. Plays a role in the development of the vulva, somatic gonad and embryo. The protein is U6 small nuclear RNA (adenine-(43)-N(6))-methyltransferase of Caenorhabditis elegans.